Here is a 41-residue protein sequence, read N- to C-terminus: Urotensin-1 (41 aa).

Position 41 is a valine amide (V41).

This sequence belongs to the sauvagine/corticotropin-releasing factor/urotensin I family.

It localises to the secreted. Functionally, urotensin is found in the teleost caudal neurosecretory system. It has a suggested role in osmoregulation and as a corticotropin-releasing factor. This is Urotensin-1 from Catostomus commersonii (White sucker).